Consider the following 552-residue polypeptide: Glutamine--tRNA ligase (552 aa).

The 'HIGH' region signature appears at 34 to 44; sequence PEPNGYLHIGH. ATP-binding positions include 35 to 37 and 41 to 47; these read EPN and HIGHAKS. Aspartate 67 and tyrosine 212 together coordinate L-glutamine. ATP is bound by residues threonine 231, 261–262, and 269–271; these read RL and MSK. The short motif at 268-272 is the 'KMSKS' region element; sequence LMSKR.

This sequence belongs to the class-I aminoacyl-tRNA synthetase family. Monomer.

It is found in the cytoplasm. The catalysed reaction is tRNA(Gln) + L-glutamine + ATP = L-glutaminyl-tRNA(Gln) + AMP + diphosphate. The sequence is that of Glutamine--tRNA ligase from Hamiltonella defensa subsp. Acyrthosiphon pisum (strain 5AT).